A 510-amino-acid polypeptide reads, in one-letter code: Glutamyl-tRNA(Gln) amidotransferase subunit A (510 aa).

Active-site charge relay system residues include Lys82 and Ser157. Ser181 functions as the Acyl-ester intermediate in the catalytic mechanism.

The protein belongs to the amidase family. GatA subfamily. Heterotrimer of A, B and C subunits.

It carries out the reaction L-glutamyl-tRNA(Gln) + L-glutamine + ATP + H2O = L-glutaminyl-tRNA(Gln) + L-glutamate + ADP + phosphate + H(+). Its function is as follows. Allows the formation of correctly charged Gln-tRNA(Gln) through the transamidation of misacylated Glu-tRNA(Gln) in organisms which lack glutaminyl-tRNA synthetase. The reaction takes place in the presence of glutamine and ATP through an activated gamma-phospho-Glu-tRNA(Gln). This is Glutamyl-tRNA(Gln) amidotransferase subunit A from Bordetella avium (strain 197N).